A 294-amino-acid chain; its full sequence is Nitrogenase iron protein (294 aa).

ATP is bound at residue Gly11–Ser18. Cys99 contacts [4Fe-4S] cluster. Arg102 bears the ADP-ribosylarginine; by dinitrogenase reductase ADP-ribosyltransferase mark. Cys133 lines the [4Fe-4S] cluster pocket.

The protein belongs to the NifH/BchL/ChlL family. As to quaternary structure, homodimer. The cofactor is [4Fe-4S] cluster. The reversible ADP-ribosylation of Arg-102 inactivates the nitrogenase reductase and regulates nitrogenase activity.

It carries out the reaction N2 + 8 reduced [2Fe-2S]-[ferredoxin] + 16 ATP + 16 H2O = H2 + 8 oxidized [2Fe-2S]-[ferredoxin] + 2 NH4(+) + 16 ADP + 16 phosphate + 6 H(+). In terms of biological role, the key enzymatic reactions in nitrogen fixation are catalyzed by the nitrogenase complex, which has 2 components: the iron protein and the molybdenum-iron protein. The sequence is that of Nitrogenase iron protein (nifH) from Bradyrhizobium diazoefficiens (strain JCM 10833 / BCRC 13528 / IAM 13628 / NBRC 14792 / USDA 110).